The primary structure comprises 414 residues: tRNA(Ile)-lysidine synthase (414 aa).

17 to 22 (SGGCDS) is an ATP binding site.

This sequence belongs to the tRNA(Ile)-lysidine synthase family.

It localises to the cytoplasm. The catalysed reaction is cytidine(34) in tRNA(Ile2) + L-lysine + ATP = lysidine(34) in tRNA(Ile2) + AMP + diphosphate + H(+). Its function is as follows. Ligates lysine onto the cytidine present at position 34 of the AUA codon-specific tRNA(Ile) that contains the anticodon CAU, in an ATP-dependent manner. Cytidine is converted to lysidine, thus changing the amino acid specificity of the tRNA from methionine to isoleucine. The chain is tRNA(Ile)-lysidine synthase from Exiguobacterium sibiricum (strain DSM 17290 / CCUG 55495 / CIP 109462 / JCM 13490 / 255-15).